The chain runs to 149 residues: Ribonuclease HI (149 aa).

An RNase H type-1 domain is found at 1 to 142 (MTPKVTIYTD…ADALANEGLR (142 aa)). Aspartate 10, glutamate 48, aspartate 70, and aspartate 134 together coordinate Mg(2+).

Belongs to the RNase H family. In terms of assembly, monomer. It depends on Mg(2+) as a cofactor.

It is found in the cytoplasm. It catalyses the reaction Endonucleolytic cleavage to 5'-phosphomonoester.. Functionally, endonuclease that specifically degrades the RNA of RNA-DNA hybrids. The chain is Ribonuclease HI from Caulobacter vibrioides (strain ATCC 19089 / CIP 103742 / CB 15) (Caulobacter crescentus).